A 310-amino-acid polypeptide reads, in one-letter code: Pseudouridine-5'-phosphate glycosidase (310 aa).

Residue Glu26 is the Proton donor of the active site. Residues Lys87 and Val107 each contribute to the substrate site. Residue Asp139 coordinates Mn(2+). Residue Ser141–Asp143 coordinates substrate. The active-site Nucleophile is Lys160.

The protein belongs to the pseudouridine-5'-phosphate glycosidase family. Homotrimer. Mn(2+) serves as cofactor.

The catalysed reaction is D-ribose 5-phosphate + uracil = psi-UMP + H2O. In terms of biological role, catalyzes the reversible cleavage of pseudouridine 5'-phosphate (PsiMP) to ribose 5-phosphate and uracil. Functions biologically in the cleavage direction, as part of a pseudouridine degradation pathway. The chain is Pseudouridine-5'-phosphate glycosidase from Roseobacter denitrificans (strain ATCC 33942 / OCh 114) (Erythrobacter sp. (strain OCh 114)).